Consider the following 500-residue polypeptide: Lysine--tRNA ligase (500 aa).

Mg(2+) contacts are provided by E410 and E417.

The protein belongs to the class-II aminoacyl-tRNA synthetase family. In terms of assembly, homodimer. Mg(2+) is required as a cofactor.

Its subcellular location is the cytoplasm. It carries out the reaction tRNA(Lys) + L-lysine + ATP = L-lysyl-tRNA(Lys) + AMP + diphosphate. This Pseudomonas fluorescens (strain ATCC BAA-477 / NRRL B-23932 / Pf-5) protein is Lysine--tRNA ligase.